The following is a 215-amino-acid chain: Ribonuclease S-6 (215 aa).

The N-terminal stretch at 1 to 22 (MFNLPLTSVFVIFLFALSPIYG) is a signal peptide. Residue Gln32 coordinates RNA. An intrachain disulfide couples Cys38 to Cys43. The N-linked (GlcNAc...) asparagine glycan is linked to Asn49. His53 provides a ligand contact to RNA. Catalysis depends on His53, which acts as the Proton donor. The N-linked (GlcNAc...) asparagine glycan is linked to Asn59. An intrachain disulfide couples Cys67 to Cys116. RNA contacts are provided by residues 91–92 (DL), Arg94, Phe105, 108–109 (RE), and 112–113 (KH). Glu109 is an active-site residue. The Proton acceptor role is filled by His113. Asn160 and Asn172 each carry an N-linked (GlcNAc...) asparagine glycan. Disulfide bonds link Cys175-Cys204 and Cys187-Cys198.

The protein belongs to the RNase T2 family.

It localises to the secreted. The protein resides in the extracellular space. It carries out the reaction a ribonucleotidyl-ribonucleotide-RNA + H2O = a 3'-end 3'-phospho-ribonucleotide-RNA + a 5'-end dephospho-ribonucleoside-RNA + H(+). Functionally, self-incompatibility (SI) is the inherited ability of a flowering plant to prevent self-fertilization by discriminating between self and non-self pollen during pollination. In many species of the Solanaceae, self-incompatibility is controlled by the single, multiallelic locus S. This stylar glycoprotein is associated with expression of self-incompatibility in potato. In Nicotiana alata (Winged tobacco), this protein is Ribonuclease S-6.